A 637-amino-acid polypeptide reads, in one-letter code: ATP-dependent zinc metalloprotease FtsH (637 aa).

Residues 1–6 (MNNQGR) lie on the Cytoplasmic side of the membrane. Residues 7-27 (SILAWAALFIFVILLFNVFQS) form a helical membrane-spanning segment. Topologically, residues 28 to 103 (DGLLGVRNNI…VVPLETRMNT (76 aa)) are periplasmic. A helical membrane pass occupies residues 104–124 (FLGFLISWFPMLLLIGVWVFF). Residues 125-637 (MRQMHGGGKA…TKDKKENIIS (513 aa)) are Cytoplasmic-facing. 195–202 (GPPGTGKT) contacts ATP. His417 contacts Zn(2+). The active site involves Glu418. Zn(2+)-binding residues include His421 and Asp495.

It in the central section; belongs to the AAA ATPase family. The protein in the C-terminal section; belongs to the peptidase M41 family. Homohexamer. Requires Zn(2+) as cofactor.

The protein resides in the cell inner membrane. Functionally, acts as a processive, ATP-dependent zinc metallopeptidase for both cytoplasmic and membrane proteins. Plays a role in the quality control of integral membrane proteins. The sequence is that of ATP-dependent zinc metalloprotease FtsH from Rickettsia prowazekii (strain Madrid E).